A 312-amino-acid chain; its full sequence is Olfactory receptor 1D2 (312 aa).

The Extracellular segment spans residues 1–25 (MDGGNQSEGSEFLLLGMSESPEQQR). Asn-5 carries an N-linked (GlcNAc...) asparagine glycan. A helical transmembrane segment spans residues 26–49 (ILFWMFLSMYLVTVVGNVLIILAI). The Cytoplasmic segment spans residues 50–57 (SSDSRLHT). A helical transmembrane segment spans residues 58–79 (PVYFFLANLSFTDLFFVTNTIP). The Extracellular segment spans residues 80–100 (KMLVNLQSHNKAISYAGCLTQ). Cys-97 and Cys-189 are disulfide-bonded. Residues 101–120 (LYFLVSLVALDNLILAVMAY) traverse the membrane as a helical segment. Over 121 to 139 (DRYVAICCPLHYTTAMSPK) the chain is Cytoplasmic. A helical transmembrane segment spans residues 140 to 158 (LCILLLSLCWVLSVLYGLI). Residues 159-196 (HTLLMTRVTFCGSRKIHYIFCEMYVLLRMACSNIQINH) are Extracellular-facing. An N-linked (GlcNAc...) asparagine glycan is attached at Asn-195. A helical transmembrane segment spans residues 197–219 (TVLIATGCFIFLIPFGFVIISYV). The Cytoplasmic portion of the chain corresponds to 220 to 236 (LIIRAILRIPSVSKKYK). Residues 237–259 (AFSTCASHLGAVSLFYGTLCMVY) traverse the membrane as a helical segment. Residues 260–271 (LKPLHTYSVKDS) lie on the Extracellular side of the membrane. A helical transmembrane segment spans residues 272-291 (VATVMYAVVTPMMNPFIYSL). Over 292–312 (RNKDMHGALGRLLDKHFKRLT) the chain is Cytoplasmic.

Belongs to the G-protein coupled receptor 1 family. As to expression, expressed in testis. Expressed in spermatozoa (at protein level). Expressed in olfactory epithelium.

It is found in the cell membrane. Odorant receptor which may be involved in sperm chemotaxis. Bourgeonal is a strong chemoattractant for sperm in vitro and is shown to be a strong agonist for OR1D2 in vitro. May also function in olfactory reception. This Homo sapiens (Human) protein is Olfactory receptor 1D2 (OR1D2).